Reading from the N-terminus, the 246-residue chain is Uroporphyrinogen-III synthase (246 aa).

It belongs to the uroporphyrinogen-III synthase family. As to quaternary structure, monomer.

It carries out the reaction hydroxymethylbilane = uroporphyrinogen III + H2O. It functions in the pathway porphyrin-containing compound metabolism; protoporphyrin-IX biosynthesis; coproporphyrinogen-III from 5-aminolevulinate: step 3/4. Its function is as follows. Catalyzes cyclization of the linear tetrapyrrole, hydroxymethylbilane, to the macrocyclic uroporphyrinogen III. In Escherichia coli (strain K12), this protein is Uroporphyrinogen-III synthase (hemD).